We begin with the raw amino-acid sequence, 156 residues long: MARRRRPEKREILPDPKFGDVVLSKFMNSVMLDGKKSVAEGIVYGALETIETRAKREPLGVFHEALNNVKPGIEVRSRRVGGATYQVPVEVRPDRSQALAIRWLISAARARSEHTMAGRLSGELLDAANNRGNAVKKREDTHRMAEANRAFSHYRW.

The protein belongs to the universal ribosomal protein uS7 family. In terms of assembly, part of the 30S ribosomal subunit. Contacts proteins S9 and S11.

One of the primary rRNA binding proteins, it binds directly to 16S rRNA where it nucleates assembly of the head domain of the 30S subunit. Is located at the subunit interface close to the decoding center, probably blocks exit of the E-site tRNA. The chain is Small ribosomal subunit protein uS7 from Rhizorhabdus wittichii (strain DSM 6014 / CCUG 31198 / JCM 15750 / NBRC 105917 / EY 4224 / RW1) (Sphingomonas wittichii).